Reading from the N-terminus, the 635-residue chain is MIKITLKDGKVMEIEEGIKISDIAMKISPALYKKALAAKIDGETVDLMTELHKDSSLEILTFEDEMGKWALRHTGAHILAQAVKRLYPEVKLAIGPAIDTGFYYDFEADFTFTPEMLEKIEAEIKKIIKENHKLERFELPREEAINLMKEKNEDYKVELIEDLPEGEVISFYKQGDFTDLCAGPHVPSTGKVKSVKLLSLAGAYWRGDEKNKMLQRIYGTAFTKKSELDEYLNMIEEAKKRDHRKLGKELDLFSIHEEGPGFPFFHPKGMIVRNILESFWREKHTKAGYQEIRTPLILNEALWHQSGHWDHYKENMYFTNIDDGDYAIKPMNCPGGILVYKSSMHSYRDLPLRLSELGIVHRHELSGALHGLMRVRCFTQDDAHLYMTKEQIKEEVIGIIKLIDEFYKLFGFEYFVELSTRPEDSMGSDEDWEIATNGLREALDSIGKEYRVNEGDGAFYGPKIDFHLKDCIGRTWQCGTIQLDFQMPERFDLSYIGADGEKHRPVMVHRTIYGSVERFIGILIEQYAGAFPTWLAPVQVKLMNITDSQYDYLKKVEETLKENNIRVEIDTRNEKIGYKIREAQLQKVPYMLILGDKEVEAGKVAVRSRKDGDLGAISLEEFIEKIKNEIKNKTN.

The 61-residue stretch at 1–61 (MIKITLKDGK…HKDSSLEILT (61 aa)) folds into the TGS domain. The interval 242–532 (DHRKLGKELD…LIEQYAGAFP (291 aa)) is catalytic. Positions 333, 384, and 509 each coordinate Zn(2+).

Belongs to the class-II aminoacyl-tRNA synthetase family. Homodimer. The cofactor is Zn(2+).

The protein resides in the cytoplasm. The enzyme catalyses tRNA(Thr) + L-threonine + ATP = L-threonyl-tRNA(Thr) + AMP + diphosphate + H(+). Its function is as follows. Catalyzes the attachment of threonine to tRNA(Thr) in a two-step reaction: L-threonine is first activated by ATP to form Thr-AMP and then transferred to the acceptor end of tRNA(Thr). Also edits incorrectly charged L-seryl-tRNA(Thr). This chain is Threonine--tRNA ligase, found in Clostridium botulinum (strain Langeland / NCTC 10281 / Type F).